The following is a 125-amino-acid chain: MARIASVNIPDNKRLVVSLTYIYGLGSTMAAEICNKAKISRDKKVKVLTDQELIRLRNIIENEYKVEGDLRREVTLNIKKKKDIRCYQGLRHIRKLPVRGQNTHSNARTRKGKAIAIAGKKKTVK.

The protein belongs to the universal ribosomal protein uS13 family. As to quaternary structure, part of the 30S ribosomal subunit. Forms a loose heterodimer with protein S19. Forms two bridges to the 50S subunit in the 70S ribosome.

In terms of biological role, located at the top of the head of the 30S subunit, it contacts several helices of the 16S rRNA. In the 70S ribosome it contacts the 23S rRNA (bridge B1a) and protein L5 of the 50S subunit (bridge B1b), connecting the 2 subunits; these bridges are implicated in subunit movement. Contacts the tRNAs in the A and P-sites. The sequence is that of Small ribosomal subunit protein uS13 from Rickettsia typhi (strain ATCC VR-144 / Wilmington).